The chain runs to 352 residues: Isopentenyl-diphosphate delta-isomerase (352 aa).

Arg-6–Lys-7 is a binding site for substrate. FMN-binding positions include Ala-63–Thr-65, Ser-93, and Asn-122. A substrate-binding site is contributed by Ser-93–Arg-95. A substrate-binding site is contributed by Gln-160. A Mg(2+)-binding site is contributed by Glu-161. FMN-binding positions include Lys-192, Thr-221, Gly-271–Arg-273, and Ser-292–Gln-293.

Belongs to the IPP isomerase type 2 family. In terms of assembly, homooctamer. Dimer of tetramers. The cofactor is FMN. NADPH is required as a cofactor. Mg(2+) serves as cofactor.

The protein resides in the cytoplasm. The catalysed reaction is isopentenyl diphosphate = dimethylallyl diphosphate. Its function is as follows. Involved in the biosynthesis of isoprenoids. Catalyzes the 1,3-allylic rearrangement of the homoallylic substrate isopentenyl (IPP) to its allylic isomer, dimethylallyl diphosphate (DMAPP). This chain is Isopentenyl-diphosphate delta-isomerase, found in Pyrobaculum arsenaticum (strain DSM 13514 / JCM 11321 / PZ6).